The primary structure comprises 330 residues: Phytanoyl-CoA hydroxylase-interacting protein (330 aa).

The Fibronectin type-III domain occupies 6-115; the sequence is TPHSIEINNI…ETVEFCTGDY (110 aa). N-linked (GlcNAc...) asparagine glycosylation is found at Asn14 and Asn325.

The protein belongs to the PHYHIP family. As to quaternary structure, interacts with PHYH and ADGRB1. As to expression, highly expressed in the brain.

Functionally, its interaction with PHYH suggests a role in the development of the central system. This is Phytanoyl-CoA hydroxylase-interacting protein (Phyhip) from Mus musculus (Mouse).